A 260-amino-acid chain; its full sequence is Indole-3-glycerol phosphate synthase (260 aa).

The protein belongs to the TrpC family.

The catalysed reaction is 1-(2-carboxyphenylamino)-1-deoxy-D-ribulose 5-phosphate + H(+) = (1S,2R)-1-C-(indol-3-yl)glycerol 3-phosphate + CO2 + H2O. Its pathway is amino-acid biosynthesis; L-tryptophan biosynthesis; L-tryptophan from chorismate: step 4/5. The protein is Indole-3-glycerol phosphate synthase (trpC) of Lacticaseibacillus casei (Lactobacillus casei).